The chain runs to 118 residues: Large ribosomal subunit protein uL18 (118 aa).

The protein belongs to the universal ribosomal protein uL18 family. Part of the 50S ribosomal subunit; part of the 5S rRNA/L5/L18/L25 subcomplex. Contacts the 5S and 23S rRNAs.

This is one of the proteins that bind and probably mediate the attachment of the 5S RNA into the large ribosomal subunit, where it forms part of the central protuberance. This chain is Large ribosomal subunit protein uL18, found in Dechloromonas aromatica (strain RCB).